The following is a 378-amino-acid chain: Protein-glutamate methylesterase/protein-glutamine glutaminase 2 (378 aa).

Residues 4 to 121 enclose the Response regulatory domain; the sequence is KVLVVDDSGF…SRNPEKVKQL (118 aa). Residue D55 is modified to 4-aspartylphosphate. The interval 141 to 188 is disordered; that stretch reads APAPAAAPTPAPIPAAAPSSFGSHSAPARPAPAPAPTRAPAASASSPA. Residues 145 to 155 are compositionally biased toward pro residues; sequence AAAPTPAPIPA. Composition is skewed to low complexity over residues 156–168 and 178–188; these read AAPS…SAPA and RAPAASASSPA. Residues 187–378 form the CheB-type methylesterase domain; the sequence is PAPKRKNYKL…IGKHIVEACV (192 aa). Catalysis depends on residues S202, H229, and D322.

Belongs to the CheB family. Phosphorylated by CheA. Phosphorylation of the N-terminal regulatory domain activates the methylesterase activity.

Its subcellular location is the cytoplasm. It carries out the reaction [protein]-L-glutamate 5-O-methyl ester + H2O = L-glutamyl-[protein] + methanol + H(+). The catalysed reaction is L-glutaminyl-[protein] + H2O = L-glutamyl-[protein] + NH4(+). Functionally, involved in chemotaxis. Part of a chemotaxis signal transduction system that modulates chemotaxis in response to various stimuli. Catalyzes the demethylation of specific methylglutamate residues introduced into the chemoreceptors (methyl-accepting chemotaxis proteins or MCP) by CheR. Also mediates the irreversible deamidation of specific glutamine residues to glutamic acid. This chain is Protein-glutamate methylesterase/protein-glutamine glutaminase 2, found in Pseudomonas fluorescens (strain Pf0-1).